The sequence spans 93 residues: Stromal cell-derived factor 1 (93 aa).

Residues 1-21 (MNAKVVVVLVLVLTALCLSDG) form the signal peptide. The Receptor activation motif motif lies at 22–23 (KP). Residues 29 to 33 (RCPCR) form a receptor and heparin binding region. Intrachain disulfides connect Cys-30/Cys-55 and Cys-32/Cys-71. 3 receptor binding regions span residues 39–41 (VAR), 48–50 (KIL), and 60–70 (VARLKNNNRQV). Heparin-binding positions include 41–51 (RANVKHLKILN), Arg-62, Gln-69, and Lys-85.

The protein belongs to the intercrine alpha (chemokine CxC) family. As to quaternary structure, monomer or homodimer; in equilibrium. Dimer formation is induced by non acidic pH and the presence of multivalent anions, and by binding to CXCR4 or heparin. Monomeric form is required for full chemotactic activity and resistance to ischemia/reperfusion injury, whereas the dimeric form acts as a partial agonist of CXCR4, stimulating Ca2+ mobilization but with no chemotactic activity and instead acts as a selective antagonist that blocks chemotaxis induced by the monomeric form. Interacts with the N-terminus of ACKR3. Interacts with integrin subunit ITGB3 (via the allosteric site (site 2)). Interacts with TNFAIP6 (via Link domain). (Microbial infection) Interacts with molluscum contagiosum virus protein MC148. Processed forms SDF-1-beta(3-72) and SDF-1-alpha(3-67) are produced after secretion by proteolytic cleavage of isoforms Beta and Alpha, respectively. The N-terminal processing is probably achieved by DPP4. Isoform Alpha is first cleaved at the C-terminus to yield a SDF-1-alpha(1-67) intermediate before being processed at the N-terminus. The C-terminal processing of isoform Alpha is reduced by binding to heparin and, probably, cell surface proteoglycans. As to expression, isoform Alpha and isoform Beta are ubiquitously expressed, with highest levels detected in liver, pancreas and spleen. Isoform Gamma is mainly expressed in heart, with weak expression detected in several other tissues. Isoform Delta, isoform Epsilon and isoform Theta have highest expression levels in pancreas, with lower levels detected in heart, kidney, liver and spleen.

The protein resides in the secreted. Its function is as follows. Chemoattractant active on T-lymphocytes and monocytes but not neutrophils. Activates the C-X-C chemokine receptor CXCR4 to induce a rapid and transient rise in the level of intracellular calcium ions and chemotaxis. SDF-1-beta(3-72) and SDF-1-alpha(3-67) show a reduced chemotactic activity. Binding to cell surface proteoglycans seems to inhibit formation of SDF-1-alpha(3-67) and thus to preserve activity on local sites. Also binds to atypical chemokine receptor ACKR3, which activates the beta-arrestin pathway and acts as a scavenger receptor for SDF-1. Binds to the allosteric site (site 2) of integrins and activates integrins ITGAV:ITGB3, ITGA4:ITGB1 and ITGA5:ITGB1 in a CXCR4-independent manner. Acts as a positive regulator of monocyte migration and a negative regulator of monocyte adhesion via the LYN kinase. Stimulates migration of monocytes and T-lymphocytes through its receptors, CXCR4 and ACKR3, and decreases monocyte adherence to surfaces coated with ICAM-1, a ligand for beta-2 integrins. SDF1A/CXCR4 signaling axis inhibits beta-2 integrin LFA-1 mediated adhesion of monocytes to ICAM-1 through LYN kinase. Inhibits CXCR4-mediated infection by T-cell line-adapted HIV-1. Plays a protective role after myocardial infarction. Induces down-regulation and internalization of ACKR3 expressed in various cells. Has several critical functions during embryonic development; required for B-cell lymphopoiesis, myelopoiesis in bone marrow and heart ventricular septum formation. Stimulates the proliferation of bone marrow-derived B-cell progenitors in the presence of IL7 as well as growth of stromal cell-dependent pre-B-cells. This Homo sapiens (Human) protein is Stromal cell-derived factor 1 (CXCL12).